The primary structure comprises 211 residues: Peptidyl-tRNA hydrolase (211 aa).

Tyr15 is a binding site for tRNA. His20 functions as the Proton acceptor in the catalytic mechanism. TRNA-binding residues include Phe66, Asn68, and Asn114. The interval 189–211 (TKPPRPKATRPAQAQAAPQAGAD) is disordered. Over residues 197–211 (TRPAQAQAAPQAGAD) the composition is skewed to low complexity.

This sequence belongs to the PTH family. In terms of assembly, monomer.

The protein resides in the cytoplasm. It carries out the reaction an N-acyl-L-alpha-aminoacyl-tRNA + H2O = an N-acyl-L-amino acid + a tRNA + H(+). Functionally, hydrolyzes ribosome-free peptidyl-tRNAs (with 1 or more amino acids incorporated), which drop off the ribosome during protein synthesis, or as a result of ribosome stalling. In terms of biological role, catalyzes the release of premature peptidyl moieties from peptidyl-tRNA molecules trapped in stalled 50S ribosomal subunits, and thus maintains levels of free tRNAs and 50S ribosomes. The protein is Peptidyl-tRNA hydrolase of Acidovorax ebreus (strain TPSY) (Diaphorobacter sp. (strain TPSY)).